A 386-amino-acid chain; its full sequence is MNIHEYQGKEVLRKYGVAVPEGKVAFTADEAVKAAEALSSSVYVVKAQIHAGGRGKAGGVKIAKSKEEVKAYAEELLGKTLVTHQTGPDGQQIKRLLIEEGCDIKKEYYVGLVLDRATSRIVLMASEEGGTEIEEVAEKTPEKIVKEVIDPAVGLQSYQARKIAFAINIPKELVGQAVKFMMGLYKAFTEKDCSIAEINPLVVTGDGKVMALDAKLNFDSNALYRQKDILEYRDLDEEDPKEIEASKYDLSYISLDGNIGCMVNGAGLAMSTMDIIKHYGGEPANFLDVGGGATAEKVTEAFKIILSDQNVKGIFVNIFGGIMKCDVIAEGVVEATKQVGLTLPLVVRLEGTNVDLGKKILDDSGLNITSAESMADGAQKIVSLVK.

An ATP-grasp domain is found at 9-244 (KEVLRKYGVA…LDEEDPKEIE (236 aa)). ATP contacts are provided by residues Lys-46, 53 to 55 (GRG), Glu-99, Cys-102, and Glu-107. Mg(2+)-binding residues include Asn-199 and Asp-213. Residues Asn-264 and 321-323 (GIM) contribute to the substrate site.

This sequence belongs to the succinate/malate CoA ligase beta subunit family. In terms of assembly, heterotetramer of two alpha and two beta subunits. Mg(2+) serves as cofactor.

It catalyses the reaction succinate + ATP + CoA = succinyl-CoA + ADP + phosphate. It carries out the reaction GTP + succinate + CoA = succinyl-CoA + GDP + phosphate. Its pathway is carbohydrate metabolism; tricarboxylic acid cycle; succinate from succinyl-CoA (ligase route): step 1/1. In terms of biological role, succinyl-CoA synthetase functions in the citric acid cycle (TCA), coupling the hydrolysis of succinyl-CoA to the synthesis of either ATP or GTP and thus represents the only step of substrate-level phosphorylation in the TCA. The beta subunit provides nucleotide specificity of the enzyme and binds the substrate succinate, while the binding sites for coenzyme A and phosphate are found in the alpha subunit. The chain is Succinate--CoA ligase [ADP-forming] subunit beta from Bacillus licheniformis (strain ATCC 14580 / DSM 13 / JCM 2505 / CCUG 7422 / NBRC 12200 / NCIMB 9375 / NCTC 10341 / NRRL NRS-1264 / Gibson 46).